The sequence spans 306 residues: Agmatinase (306 aa).

Mn(2+) is bound by residues H126, D149, H151, D153, D230, and D232.

It belongs to the arginase family. Agmatinase subfamily. The cofactor is Mn(2+).

The enzyme catalyses agmatine + H2O = urea + putrescine. It functions in the pathway amine and polyamine biosynthesis; putrescine biosynthesis via agmatine pathway; putrescine from agmatine: step 1/1. Catalyzes the formation of putrescine from agmatine. The protein is Agmatinase of Serratia proteamaculans (strain 568).